A 499-amino-acid polypeptide reads, in one-letter code: Glycerol kinase (499 aa).

An ADP-binding site is contributed by threonine 13. ATP-binding residues include threonine 13, threonine 14, and serine 15. Position 13 (threonine 13) interacts with sn-glycerol 3-phosphate. Arginine 17 serves as a coordination point for ADP. Sn-glycerol 3-phosphate contacts are provided by arginine 83, glutamate 84, tyrosine 135, and aspartate 245. Glycerol contacts are provided by arginine 83, glutamate 84, tyrosine 135, aspartate 245, and glutamine 246. ADP contacts are provided by threonine 267 and glycine 310. Threonine 267, glycine 310, glutamine 314, and glycine 411 together coordinate ATP. ADP-binding residues include glycine 411 and asparagine 415.

It belongs to the FGGY kinase family.

It catalyses the reaction glycerol + ATP = sn-glycerol 3-phosphate + ADP + H(+). It functions in the pathway polyol metabolism; glycerol degradation via glycerol kinase pathway; sn-glycerol 3-phosphate from glycerol: step 1/1. With respect to regulation, inhibited by fructose 1,6-bisphosphate (FBP). In terms of biological role, key enzyme in the regulation of glycerol uptake and metabolism. Catalyzes the phosphorylation of glycerol to yield sn-glycerol 3-phosphate. This chain is Glycerol kinase, found in Xanthomonas campestris pv. campestris (strain ATCC 33913 / DSM 3586 / NCPPB 528 / LMG 568 / P 25).